Consider the following 44-residue polypeptide: Cytochrome b559 subunit beta (44 aa).

The chain crosses the membrane as a helical span at residues tryptophan 19–alanine 35. Histidine 23 lines the heme pocket.

It belongs to the PsbE/PsbF family. In terms of assembly, heterodimer of an alpha subunit and a beta subunit. PSII is composed of 1 copy each of membrane proteins PsbA, PsbB, PsbC, PsbD, PsbE, PsbF, PsbH, PsbI, PsbJ, PsbK, PsbL, PsbM, PsbT, PsbX, PsbY, PsbZ, Psb30/Ycf12, peripheral proteins PsbO, CyanoQ (PsbQ), PsbU, PsbV and a large number of cofactors. It forms dimeric complexes. It depends on heme b as a cofactor.

It is found in the cellular thylakoid membrane. Its function is as follows. This b-type cytochrome is tightly associated with the reaction center of photosystem II (PSII). PSII is a light-driven water:plastoquinone oxidoreductase that uses light energy to abstract electrons from H(2)O, generating O(2) and a proton gradient subsequently used for ATP formation. It consists of a core antenna complex that captures photons, and an electron transfer chain that converts photonic excitation into a charge separation. The chain is Cytochrome b559 subunit beta from Trichodesmium erythraeum (strain IMS101).